The primary structure comprises 335 residues: Large ribosomal subunit protein uL3 (335 aa).

The segment at 1 to 20 (MATIHRPRRGSLAFSPRKRA) is disordered.

The protein belongs to the universal ribosomal protein uL3 family. As to quaternary structure, part of the 50S ribosomal subunit. Forms a cluster with proteins L14 and L24e.

Its function is as follows. One of the primary rRNA binding proteins, it binds directly near the 3'-end of the 23S rRNA, where it nucleates assembly of the 50S subunit. This is Large ribosomal subunit protein uL3 (rpl3) from Methanothrix harundinacea (strain 6Ac) (Methanosaeta harundinacea).